A 255-amino-acid chain; its full sequence is Imidazole glycerol phosphate synthase subunit HisF (255 aa).

Residues Asp-11 and Asp-130 contribute to the active site.

The protein belongs to the HisA/HisF family. In terms of assembly, heterodimer of HisH and HisF.

It is found in the cytoplasm. It catalyses the reaction 5-[(5-phospho-1-deoxy-D-ribulos-1-ylimino)methylamino]-1-(5-phospho-beta-D-ribosyl)imidazole-4-carboxamide + L-glutamine = D-erythro-1-(imidazol-4-yl)glycerol 3-phosphate + 5-amino-1-(5-phospho-beta-D-ribosyl)imidazole-4-carboxamide + L-glutamate + H(+). The protein operates within amino-acid biosynthesis; L-histidine biosynthesis; L-histidine from 5-phospho-alpha-D-ribose 1-diphosphate: step 5/9. Functionally, IGPS catalyzes the conversion of PRFAR and glutamine to IGP, AICAR and glutamate. The HisF subunit catalyzes the cyclization activity that produces IGP and AICAR from PRFAR using the ammonia provided by the HisH subunit. This is Imidazole glycerol phosphate synthase subunit HisF from Rhodopseudomonas palustris (strain ATCC BAA-98 / CGA009).